The primary structure comprises 88 residues: Large ribosomal subunit protein bL27 (88 aa).

Residues M1–V23 are disordered.

It belongs to the bacterial ribosomal protein bL27 family.

The chain is Large ribosomal subunit protein bL27 from Methylorubrum extorquens (strain CM4 / NCIMB 13688) (Methylobacterium extorquens).